Reading from the N-terminus, the 218-residue chain is Protein-L-isoaspartate O-methyltransferase (218 aa).

The active site involves Ser-63.

This sequence belongs to the methyltransferase superfamily. L-isoaspartyl/D-aspartyl protein methyltransferase family.

It is found in the cytoplasm. The enzyme catalyses [protein]-L-isoaspartate + S-adenosyl-L-methionine = [protein]-L-isoaspartate alpha-methyl ester + S-adenosyl-L-homocysteine. Functionally, catalyzes the methyl esterification of L-isoaspartyl residues in peptides and proteins that result from spontaneous decomposition of normal L-aspartyl and L-asparaginyl residues. It plays a role in the repair and/or degradation of damaged proteins. The protein is Protein-L-isoaspartate O-methyltransferase of Syntrophus aciditrophicus (strain SB).